The chain runs to 597 residues: Aspartate--tRNA(Asp/Asn) ligase (597 aa).

Glu-176 is an L-aspartate binding site. Residues 200-203 (QQFK) are aspartate. 2 residues coordinate L-aspartate: Arg-222 and His-451. Residue 222–224 (RDE) participates in ATP binding. Glu-489 contacts ATP. Residue Arg-496 coordinates L-aspartate. Residue 541–544 (GIDR) participates in ATP binding.

This sequence belongs to the class-II aminoacyl-tRNA synthetase family. Type 1 subfamily. As to quaternary structure, homodimer.

The protein localises to the cytoplasm. The enzyme catalyses tRNA(Asx) + L-aspartate + ATP = L-aspartyl-tRNA(Asx) + AMP + diphosphate. In terms of biological role, aspartyl-tRNA synthetase with relaxed tRNA specificity since it is able to aspartylate not only its cognate tRNA(Asp) but also tRNA(Asn). Reaction proceeds in two steps: L-aspartate is first activated by ATP to form Asp-AMP and then transferred to the acceptor end of tRNA(Asp/Asn). In Orientia tsutsugamushi (strain Boryong) (Rickettsia tsutsugamushi), this protein is Aspartate--tRNA(Asp/Asn) ligase.